The chain runs to 500 residues: Cytochrome P450 2D14 (500 aa).

Position 446 (C446) interacts with heme.

This sequence belongs to the cytochrome P450 family. It depends on heme as a cofactor.

It localises to the endoplasmic reticulum membrane. The protein localises to the microsome membrane. The catalysed reaction is an organic molecule + reduced [NADPH--hemoprotein reductase] + O2 = an alcohol + oxidized [NADPH--hemoprotein reductase] + H2O + H(+). Cytochromes P450 are a group of heme-thiolate monooxygenases. In liver microsomes, this enzyme is involved in an NADPH-dependent electron transport pathway. It oxidizes a variety of structurally unrelated compounds, including steroids, fatty acids, and xenobiotics. The polypeptide is Cytochrome P450 2D14 (CYP2D14) (Bos taurus (Bovine)).